Here is a 314-residue protein sequence, read N- to C-terminus: DNA topoisomerase I (314 aa).

The 238-residue stretch at 77–314 (IQNRNAKRDR…VDHVKSSTDG (238 aa)) folds into the Topo IB-type catalytic domain. Tyrosine 274 serves as the catalytic O-(3'-phospho-DNA)-tyrosine intermediate.

It belongs to the type IB topoisomerase family.

It is found in the virion. It catalyses the reaction ATP-independent breakage of single-stranded DNA, followed by passage and rejoining.. Its function is as follows. Releases the supercoiling and torsional tension of DNA introduced during the DNA replication and transcription by transiently cleaving and rejoining one strand of the DNA duplex. Introduces a single-strand break via transesterification at the specific target site 5'-[CT]CCTTp site in duplex DNA. The scissile phosphodiester is attacked by the catalytic tyrosine of the enzyme, resulting in the formation of a DNA-(3'-phosphotyrosyl)-enzyme intermediate and the expulsion of a 5'-OH DNA strand. The free DNA strand then undergoes passage around the unbroken strand thus removing DNA supercoils. Finally, in the religation step, the DNA 5'-OH attacks the covalent intermediate to expel the active-site tyrosine and restore the DNA phosphodiester backbone. The sequence is that of DNA topoisomerase I (OPG111) from Cynomys gunnisoni (Gunnison's prairie dog).